The chain runs to 408 residues: MSEKKEARVVINDLLAEQYANAFKAKEEGRPVGWSTSVFPQELAEVFDLNVLYPENQAAGVAAKKGSLELCEIAESKGYSIDLCAYARTNFGLLENGGCEALDMPAPDFLLCCNNICNQVIKWYENISRELDIPLIMIDTTFNNEDEVTQSRIDYIKAQFEEAIKQLEIISGKKFDPKKFEEVMKISAENGRLWKYSMSLPADSSPSPMNGFDLFTYMAVIVCARGKKETTEAFKLLIEELEDNMKTGKSSFRGEEKYRIMMEGIPCWPYIGYKMKTLAKFGVNMTGSVYPHAWALQYEVNDLDGMAVAYSTMFNNVNLDRMTKYRVDSLVEGKCDGAFYHMNRSCKLMSLIQYEMQRRAAEETGLPYAGFDGDQADPRAFTNAQFETRIQGLVEVMEERKKLNRGEI.

Residue Glu55 coordinates substrate. [4Fe-4S] cluster contacts are provided by Cys84, Cys117, and Cys346.

Belongs to the FldB/FldC dehydratase alpha/beta subunit family. As to quaternary structure, part of the heterodimeric complex HadBC composed of (R)-2-hydroxyisocaproyl-CoA dehydratase alpha (HadB) and beta (HadC) subunit. Requires [4Fe-4S] cluster as cofactor.

The enzyme catalyses (R)-2-hydroxy-4-methylpentanoyl-CoA = 4-methylpent-2-enoyl-CoA + H2O. Activated by HadI. Functionally, involved in the reductive branch of L-leucine fermentation. Catalyzes the irreversible beta/alpha-elimination of water from (R)-2-hydroxyisocaproyl-CoA to yield isocaprenoyl-CoA. This beta/alpha-dehydration depends on the reductive formation of ketyl radicals on the substrate generated by injection of a single electron from the ATP-dependent activator protein HadI. The enzyme is specific for the R-isomer. In Clostridioides difficile (Peptoclostridium difficile), this protein is (R)-2-hydroxyisocaproyl-CoA dehydratase alpha subunit.